A 369-amino-acid polypeptide reads, in one-letter code: 3-isopropylmalate dehydrogenase (369 aa).

NAD(+) is bound at residue 77 to 90; the sequence is GPKWDDLPFDKKPE. Residues Arg-97, Arg-107, Arg-135, and Asp-226 each coordinate substrate. 3 residues coordinate Mg(2+): Asp-226, Asp-250, and Asp-254. Position 289–301 (289–301) interacts with NAD(+); sequence GSAPDIAGKDMAN.

It belongs to the isocitrate and isopropylmalate dehydrogenases family. LeuB type 1 subfamily. In terms of assembly, homodimer. It depends on Mg(2+) as a cofactor. Mn(2+) serves as cofactor.

It is found in the cytoplasm. It catalyses the reaction (2R,3S)-3-isopropylmalate + NAD(+) = 4-methyl-2-oxopentanoate + CO2 + NADH. It participates in amino-acid biosynthesis; L-leucine biosynthesis; L-leucine from 3-methyl-2-oxobutanoate: step 3/4. In terms of biological role, catalyzes the oxidation of 3-carboxy-2-hydroxy-4-methylpentanoate (3-isopropylmalate) to 3-carboxy-4-methyl-2-oxopentanoate. The product decarboxylates to 4-methyl-2 oxopentanoate. The protein is 3-isopropylmalate dehydrogenase of Paramagnetospirillum magneticum (strain ATCC 700264 / AMB-1) (Magnetospirillum magneticum).